Consider the following 263-residue polypeptide: uncharacterized protein (263 aa).

The 236-residue stretch at 12–247 (LETQNLAIGY…ENLAKIYRTS (236 aa)) folds into the ABC transporter domain. 44 to 51 (GANGAGKS) serves as a coordination point for ATP.

This sequence belongs to the ABC transporter superfamily.

This is an uncharacterized protein from Haemophilus influenzae (strain ATCC 51907 / DSM 11121 / KW20 / Rd).